The sequence spans 589 residues: Cell fusion protein aff-1 (589 aa).

The signal sequence occupies residues 1 to 20; that stretch reads MRLWQWSIAVAICLVMVTEA. Residues 21–537 lie on the Extracellular side of the membrane; it reads RLRRHHRKRR…MAHGGDFTEW (517 aa). 7 N-linked (GlcNAc...) asparagine glycosylation sites follow: Asn-58, Asn-138, Asn-205, Asn-335, Asn-382, Asn-392, and Asn-408. A helical membrane pass occupies residues 538–558; it reads LKIGIHIVIAVGLLLLLILLF. Over 559–589 the chain is Cytoplasmic; it reads TKCLVPLACCSLSIPFKNRNKKKKKKNSSDY.

Belongs to the EFF/AFF cell fusogen family. Expressed in amphid sheath cells.

The protein resides in the cell membrane. Its subcellular location is the apical cell membrane. In terms of biological role, required for cell fusion events during development including the fusion of anchor cells (AC), vulval A and vulval D rings, and late epidermal seam cells. Required for amphid sheath cell fusion induced by entry into dauer stage. This is Cell fusion protein aff-1 from Caenorhabditis elegans.